The chain runs to 241 residues: Small ribosomal subunit protein bS6 (241 aa).

The segment covering 97 to 108 has biased composition (basic residues); that stretch reads KPKIRERNRKYT. The interval 97–241 is disordered; the sequence is KPKIRERNRK…YNNKKPQSSN (145 aa). Residues 109–118 show a composition bias toward basic and acidic residues; that stretch reads PRRDRFEKPN. Composition is skewed to low complexity over residues 130 to 151 and 161 to 182; these read QDQQATKNQQNFQQNQQNQTSQ and DDFQQVSSNQQNFGQNQQNQSG. Positions 189-202 are enriched in polar residues; it reads RQNQENIHQNSKNH.

This sequence belongs to the bacterial ribosomal protein bS6 family.

Its function is as follows. Binds together with bS18 to 16S ribosomal RNA. This Mesomycoplasma hyopneumoniae (strain 232) (Mycoplasma hyopneumoniae) protein is Small ribosomal subunit protein bS6.